A 271-amino-acid chain; its full sequence is Phosphonoacetaldehyde hydrolase (271 aa).

Asp-12 acts as the Nucleophile in catalysis. 2 residues coordinate Mg(2+): Asp-12 and Ala-14. The active-site Schiff-base intermediate with substrate is the Lys-54. Residue Asp-188 participates in Mg(2+) binding.

Belongs to the HAD-like hydrolase superfamily. PhnX family. Homodimer. The cofactor is Mg(2+).

The catalysed reaction is phosphonoacetaldehyde + H2O = acetaldehyde + phosphate + H(+). Involved in phosphonate degradation. The polypeptide is Phosphonoacetaldehyde hydrolase (Vibrio parahaemolyticus serotype O3:K6 (strain RIMD 2210633)).